The chain runs to 1896 residues: von Willebrand factor A domain-containing protein 8 (1896 aa).

Residues 1-18 (MHSRILFKGTAAAVAARR) constitute a mitochondrion transit peptide. 439 to 446 (GAKGCGKS) serves as a coordination point for ATP. The segment at 1536–1564 (GLDVSSPKHGKIDAKNAPHVGGNQWAGGT) is disordered. A VWFA domain is found at 1705–1887 (RLRVLADVSG…KEIPQILQQI (183 aa)).

Monomer.

It is found in the mitochondrion. Exhibits ATPase activity in vitro. This is von Willebrand factor A domain-containing protein 8 (vwa8) from Danio rerio (Zebrafish).